We begin with the raw amino-acid sequence, 727 residues long: 1,4-alpha-glucan branching enzyme GlgB (727 aa).

D405 serves as the catalytic Nucleophile. Catalysis depends on E458, which acts as the Proton donor.

It belongs to the glycosyl hydrolase 13 family. GlgB subfamily. In terms of assembly, monomer.

The catalysed reaction is Transfers a segment of a (1-&gt;4)-alpha-D-glucan chain to a primary hydroxy group in a similar glucan chain.. It participates in glycan biosynthesis; glycogen biosynthesis. Its function is as follows. Catalyzes the formation of the alpha-1,6-glucosidic linkages in glycogen by scission of a 1,4-alpha-linked oligosaccharide from growing alpha-1,4-glucan chains and the subsequent attachment of the oligosaccharide to the alpha-1,6 position. The sequence is that of 1,4-alpha-glucan branching enzyme GlgB from Yersinia pseudotuberculosis serotype I (strain IP32953).